A 447-amino-acid polypeptide reads, in one-letter code: Na(+)-translocating NADH-quinone reductase subunit A (447 aa).

It belongs to the NqrA family. As to quaternary structure, composed of six subunits; NqrA, NqrB, NqrC, NqrD, NqrE and NqrF.

It carries out the reaction a ubiquinone + n Na(+)(in) + NADH + H(+) = a ubiquinol + n Na(+)(out) + NAD(+). NQR complex catalyzes the reduction of ubiquinone-1 to ubiquinol by two successive reactions, coupled with the transport of Na(+) ions from the cytoplasm to the periplasm. NqrA to NqrE are probably involved in the second step, the conversion of ubisemiquinone to ubiquinol. This Neisseria meningitidis serogroup C / serotype 2a (strain ATCC 700532 / DSM 15464 / FAM18) protein is Na(+)-translocating NADH-quinone reductase subunit A.